A 224-amino-acid polypeptide reads, in one-letter code: Urease accessory protein UreF (224 aa).

It belongs to the UreF family. In terms of assembly, ureD, UreF and UreG form a complex that acts as a GTP-hydrolysis-dependent molecular chaperone, activating the urease apoprotein by helping to assemble the nickel containing metallocenter of UreC. The UreE protein probably delivers the nickel.

Its subcellular location is the cytoplasm. Its function is as follows. Required for maturation of urease via the functional incorporation of the urease nickel metallocenter. The polypeptide is Urease accessory protein UreF (Nitrosococcus oceani (strain ATCC 19707 / BCRC 17464 / JCM 30415 / NCIMB 11848 / C-107)).